Here is a 529-residue protein sequence, read N- to C-terminus: UDP-glucuronosyltransferase 2B33 (529 aa).

A signal peptide spans 1-24; it reads MSVKWTSIILLIQLSFYFSSGSCG. Residues asparagine 67 and asparagine 68 are each glycosylated (N-linked (GlcNAc...) asparagine). Residues 494–514 form a helical membrane-spanning segment; the sequence is IGFLLACVATVIFIIMKCCLF.

This sequence belongs to the UDP-glycosyltransferase family.

The protein localises to the microsome membrane. Its subcellular location is the endoplasmic reticulum membrane. The catalysed reaction is glucuronate acceptor + UDP-alpha-D-glucuronate = acceptor beta-D-glucuronoside + UDP + H(+). Functionally, UDPGTs are of major importance in the conjugation and subsequent elimination of potentially toxic xenobiotics and endogenous compounds. This isozyme has glucuronidating capacity on estriol and does not catalyze the glucuronidation of beta-estradiol. Capable of conjugating 4-hydroxyestrone, androsterone, diclofenac, and hyodeoxycholic acid. In Macaca mulatta (Rhesus macaque), this protein is UDP-glucuronosyltransferase 2B33 (UGT2B33).